A 639-amino-acid chain; its full sequence is 1-deoxy-D-xylulose-5-phosphate synthase (639 aa).

Thiamine diphosphate contacts are provided by residues histidine 79 and 120–122 (AHS). A Mg(2+)-binding site is contributed by aspartate 151. Residues 152–153 (GA), asparagine 180, tyrosine 289, and glutamate 371 each bind thiamine diphosphate. Asparagine 180 provides a ligand contact to Mg(2+).

Belongs to the transketolase family. DXPS subfamily. In terms of assembly, homodimer. The cofactor is Mg(2+). Thiamine diphosphate serves as cofactor.

It catalyses the reaction D-glyceraldehyde 3-phosphate + pyruvate + H(+) = 1-deoxy-D-xylulose 5-phosphate + CO2. The protein operates within metabolic intermediate biosynthesis; 1-deoxy-D-xylulose 5-phosphate biosynthesis; 1-deoxy-D-xylulose 5-phosphate from D-glyceraldehyde 3-phosphate and pyruvate: step 1/1. In terms of biological role, catalyzes the acyloin condensation reaction between C atoms 2 and 3 of pyruvate and glyceraldehyde 3-phosphate to yield 1-deoxy-D-xylulose-5-phosphate (DXP). The sequence is that of 1-deoxy-D-xylulose-5-phosphate synthase from Rhizorhabdus wittichii (strain DSM 6014 / CCUG 31198 / JCM 15750 / NBRC 105917 / EY 4224 / RW1) (Sphingomonas wittichii).